Here is a 96-residue protein sequence, read N- to C-terminus: Protein RnfH (96 aa).

This sequence belongs to the UPF0125 (RnfH) family.

This chain is Protein RnfH, found in Escherichia coli O139:H28 (strain E24377A / ETEC).